The following is a 267-amino-acid chain: MNAAPLVGYSSSGSEDEAEAVAAGRSKPGSGLHRCGQNPLPSQRFPVPDSVLNMFPSTEEGPEDDSARHGGRIRTFPHERGNWATHIYIPYEANEEFQDLLDVLLPRAQMFAPRLVQMEEFHLSLSQSVVLRHHWILPFVQVLKDRMASFQRFFFTANRVKIYTNQEKTRTFIGLEVSSGHAQFLDMVSEVDRVMKEFDLTTFYQDPSFHVSLAWCVGDARLQLEGQCQQELQEIVDEFEDSEMLLRVLAEQVRCKSGNKFFSMPLK.

A disordered region spans residues 1–72; it reads MNAAPLVGYS…EDDSARHGGR (72 aa). H122 acts as the Proton acceptor in catalysis. Residue 122 to 124 participates in AMP binding; that stretch reads HLS. UMP contacts are provided by residues Q166, Y204, and 208–212; that span reads SFHVS. AMP contacts are provided by residues Y204 and 206–212; that span reads DPSFHVS. H210 (proton donor) is an active-site residue.

Belongs to the 2H phosphoesterase superfamily. USB1 family. Interacts with PLRG1, CDC5L and PRPF19.

Its subcellular location is the nucleus. The enzyme catalyses a 3'-end uridylyl-uridine-RNA = a 3'-end 2',3'-cyclophospho-uridine-RNA + uridine. It catalyses the reaction a 3'-end uridylyl-adenosine-RNA = a 3'-end 2',3'-cyclophospho-uridine-RNA + adenosine. Its function is as follows. 3'-5' RNA exonuclease that trims the 3' end of oligo(U) and oligo(A) tracts of the pre-U6 small nuclear RNA (snRNA) molecule, leading to the formation of a mature U6 snRNA 3' end-terminated with a 2',3'-cyclic phosphate. Participates in the U6 snRNA 3' end processing that prevents U6 snRNA degradation. In addition also removes uridines from the 3' end of U6atac snRNA and possibly the vault RNA VTRNA1-1. The polypeptide is U6 snRNA phosphodiesterase 1 (Rattus norvegicus (Rat)).